We begin with the raw amino-acid sequence, 158 residues long: Phosphopantetheine adenylyltransferase (158 aa).

Thr-10 lines the substrate pocket. ATP contacts are provided by residues 10 to 11 (TF) and His-18. Residues Lys-42, Leu-74, and Arg-88 each contribute to the substrate site. Residues 89–91 (GIR), Glu-99, and 124–130 (WRYLSST) contribute to the ATP site.

Belongs to the bacterial CoaD family. In terms of assembly, homohexamer. The cofactor is Mg(2+).

The protein resides in the cytoplasm. It carries out the reaction (R)-4'-phosphopantetheine + ATP + H(+) = 3'-dephospho-CoA + diphosphate. Its pathway is cofactor biosynthesis; coenzyme A biosynthesis; CoA from (R)-pantothenate: step 4/5. Reversibly transfers an adenylyl group from ATP to 4'-phosphopantetheine, yielding dephospho-CoA (dPCoA) and pyrophosphate. This chain is Phosphopantetheine adenylyltransferase, found in Actinobacillus pleuropneumoniae serotype 7 (strain AP76).